Reading from the N-terminus, the 906-residue chain is Protein translocase subunit SecA (906 aa).

ATP contacts are provided by residues Gln-89, 107–111 (GEGKT), and Asp-502. Zn(2+)-binding residues include Cys-890, Cys-892, Cys-901, and His-902.

It belongs to the SecA family. In terms of assembly, monomer and homodimer. Part of the essential Sec protein translocation apparatus which comprises SecA, SecYEG and auxiliary proteins SecDF-YajC and YidC. Zn(2+) serves as cofactor.

Its subcellular location is the cell inner membrane. The protein localises to the cytoplasm. It carries out the reaction ATP + H2O + cellular proteinSide 1 = ADP + phosphate + cellular proteinSide 2.. Its function is as follows. Part of the Sec protein translocase complex. Interacts with the SecYEG preprotein conducting channel. Has a central role in coupling the hydrolysis of ATP to the transfer of proteins into and across the cell membrane, serving both as a receptor for the preprotein-SecB complex and as an ATP-driven molecular motor driving the stepwise translocation of polypeptide chains across the membrane. This chain is Protein translocase subunit SecA, found in Brucella suis biovar 1 (strain 1330).